The sequence spans 528 residues: Peptide chain release factor 3 (528 aa).

The tr-type G domain maps to 11-279 (EKRRTFAIIS…GLVEWAPKPL (269 aa)). GTP-binding positions include 20–27 (SHPDAGKT), 88–92 (DTPGH), and 142–145 (NKCD).

It belongs to the TRAFAC class translation factor GTPase superfamily. Classic translation factor GTPase family. PrfC subfamily.

It localises to the cytoplasm. Functionally, increases the formation of ribosomal termination complexes and stimulates activities of RF-1 and RF-2. It binds guanine nucleotides and has strong preference for UGA stop codons. It may interact directly with the ribosome. The stimulation of RF-1 and RF-2 is significantly reduced by GTP and GDP, but not by GMP. The protein is Peptide chain release factor 3 of Psychromonas ingrahamii (strain DSM 17664 / CCUG 51855 / 37).